The primary structure comprises 232 residues: Ornithine carbamoyltransferase (232 aa).

Carbamoyl phosphate-binding positions include Gln-15, Arg-39, and 66–69 (HPTQ). Residues Asn-99, Asp-163, and 167-168 (SM) each bind L-ornithine. Carbamoyl phosphate contacts are provided by residues 204–207 (HCLP) and Thr-232.

The protein belongs to the aspartate/ornithine carbamoyltransferase superfamily. OTCase family.

The protein localises to the cytoplasm. The enzyme catalyses carbamoyl phosphate + L-ornithine = L-citrulline + phosphate + H(+). Its pathway is amino-acid biosynthesis; L-arginine biosynthesis; L-arginine from L-ornithine and carbamoyl phosphate: step 1/3. Reversibly catalyzes the transfer of the carbamoyl group from carbamoyl phosphate (CP) to the N(epsilon) atom of ornithine (ORN) to produce L-citrulline. The protein is Ornithine carbamoyltransferase (argF) of Neisseria perflava.